Consider the following 33-residue polypeptide: Photosystem II reaction center protein Psb30 (33 aa).

The helical transmembrane segment at 5–25 threads the bilayer; sequence VIAQPIVLGLIVASGPLVIVS.

This sequence belongs to the Psb30/Ycf12 family. PSII is composed of 1 copy each of membrane proteins PsbA, PsbB, PsbC, PsbD, PsbE, PsbF, PsbH, PsbI, PsbJ, PsbK, PsbL, PsbM, PsbT, PsbX, PsbY, PsbZ, Psb30/Ycf12, peripheral proteins of the oxygen-evolving complex and a large number of cofactors. It forms dimeric complexes.

The protein localises to the plastid membrane. In terms of biological role, a core subunit of photosystem II (PSII), probably helps stabilize the reaction center. The protein is Photosystem II reaction center protein Psb30 of Aneura mirabilis (Parasitic liverwort).